A 320-amino-acid chain; its full sequence is o-succinylbenzoate synthase (320 aa).

The active-site Proton donor is the Lys133. Positions 161, 190, and 213 each coordinate Mg(2+). Lys235 functions as the Proton acceptor in the catalytic mechanism.

This sequence belongs to the mandelate racemase/muconate lactonizing enzyme family. MenC type 1 subfamily. Requires a divalent metal cation as cofactor.

It carries out the reaction (1R,6R)-6-hydroxy-2-succinyl-cyclohexa-2,4-diene-1-carboxylate = 2-succinylbenzoate + H2O. Its pathway is quinol/quinone metabolism; 1,4-dihydroxy-2-naphthoate biosynthesis; 1,4-dihydroxy-2-naphthoate from chorismate: step 4/7. It functions in the pathway quinol/quinone metabolism; menaquinone biosynthesis. Converts 2-succinyl-6-hydroxy-2,4-cyclohexadiene-1-carboxylate (SHCHC) to 2-succinylbenzoate (OSB). The polypeptide is o-succinylbenzoate synthase (Salmonella dublin (strain CT_02021853)).